The sequence spans 214 residues: Ribosomal RNA small subunit methyltransferase G (214 aa).

Residues glycine 81, methionine 86, 132 to 133 (VE), and arginine 147 contribute to the S-adenosyl-L-methionine site.

This sequence belongs to the methyltransferase superfamily. RNA methyltransferase RsmG family.

Its subcellular location is the cytoplasm. It catalyses the reaction guanosine(527) in 16S rRNA + S-adenosyl-L-methionine = N(7)-methylguanosine(527) in 16S rRNA + S-adenosyl-L-homocysteine. Functionally, specifically methylates the N7 position of guanine in position 527 of 16S rRNA. This Pseudomonas paraeruginosa (strain DSM 24068 / PA7) (Pseudomonas aeruginosa (strain PA7)) protein is Ribosomal RNA small subunit methyltransferase G.